The sequence spans 73 residues: Mitofissin (73 aa).

This sequence belongs to the ?ATG44? family. As to quaternary structure, homooligomer. Found as homooctamer in solution, but binds to membranes either as a monomer, dimer, or tetramer, not as an octamer.

The protein resides in the mitochondrion intermembrane space. Its subcellular location is the vacuole. Its function is as follows. Mitochondrial fission factor that acts directly on lipid membranes to drive mitochondrial fission required for mitophagy. Directly binds to lipid membranes and brings about lipid membrane fragility to facilitate membrane fission and engulfment of mitochondria by the phagophore. In Saccharomyces cerevisiae (strain ATCC 204508 / S288c) (Baker's yeast), this protein is Mitofissin.